The chain runs to 144 residues: MTLQFEAFCAGGLAPGWSLTVQGHADAGEEKFEINFLTDAGDIAFHVKPRFSSATVVGNAFQGGRWGQEEVSSIFPLTLGEPFEMEVSADAEHFHIYAQEQKVLQFPHRHRPLATITRVRVLSEHRLAQVELAKRSLSWGDGGY.

The Galectin domain maps to phenylalanine 5–alanine 133. Serine 138 is modified (phosphoserine).

In terms of assembly, homodimer.

The polypeptide is Grifin (Grifin) (Mus musculus (Mouse)).